A 140-amino-acid chain; its full sequence is Lysozyme E (140 aa).

An N-terminal signal peptide occupies residues 1-18; the sequence is MKAFIVLVALAMAAPALG. The C-type lysozyme domain occupies 19–140; that stretch reads RTLDRCSLAR…GWLPSIDGCF (122 aa). 4 disulfides stabilise this stretch: C24–C139, C45–C129, C80–C96, and C92–C110. Catalysis depends on residues E50 and D68.

This sequence belongs to the glycosyl hydrolase 22 family. Found in the midgut.

It catalyses the reaction Hydrolysis of (1-&gt;4)-beta-linkages between N-acetylmuramic acid and N-acetyl-D-glucosamine residues in a peptidoglycan and between N-acetyl-D-glucosamine residues in chitodextrins.. Its function is as follows. Unlikely to play an active role in the humoral immune defense. May have a function in the digestion of bacteria in the food. In Drosophila melanogaster (Fruit fly), this protein is Lysozyme E (LysE).